A 190-amino-acid chain; its full sequence is Segregation and condensation protein B (190 aa).

Belongs to the ScpB family. In terms of assembly, homodimer. Homodimerization may be required to stabilize the binding of ScpA to the Smc head domains. Component of a cohesin-like complex composed of ScpA, ScpB and the Smc homodimer, in which ScpA and ScpB bind to the head domain of Smc. The presence of the three proteins is required for the association of the complex with DNA.

It localises to the cytoplasm. Functionally, participates in chromosomal partition during cell division. May act via the formation of a condensin-like complex containing Smc and ScpA that pull DNA away from mid-cell into both cell halves. The sequence is that of Segregation and condensation protein B from Bacillus cereus (strain B4264).